The sequence spans 593 residues: UvrABC system protein C (593 aa).

In terms of domain architecture, GIY-YIG spans 17-94; sequence MEPGCYLMKD…IKQYQPRYNI (78 aa). The UVR domain occupies 199-234; it reads KTILKSLEERMLTASESLDFERAKEYRDLIQHIQNL.

The protein belongs to the UvrC family. As to quaternary structure, interacts with UvrB in an incision complex.

The protein localises to the cytoplasm. Its function is as follows. The UvrABC repair system catalyzes the recognition and processing of DNA lesions. UvrC both incises the 5' and 3' sides of the lesion. The N-terminal half is responsible for the 3' incision and the C-terminal half is responsible for the 5' incision. In Staphylococcus aureus (strain bovine RF122 / ET3-1), this protein is UvrABC system protein C.